Here is a 186-residue protein sequence, read N- to C-terminus: Putative manganese efflux pump MntP (186 aa).

6 consecutive transmembrane segments (helical) span residues 1 to 21 (MSFLTNFLLGLGLAMDAFAVS), 39 to 59 (LAVFFGSFQAMMPVLGWIGGS), 61 to 81 (VSSFVSDYAPWIAFLLLAFIG), 102 to 122 (YSVLFLLAVATSIDALAVGMS), 134 to 156 (VIIIGCVTFVMSFCGAILGYRLG), and 165 to 185 (ILGGLILIGLGGKILAEHMLW).

This sequence belongs to the MntP (TC 9.B.29) family.

It localises to the cell membrane. Functionally, probably functions as a manganese efflux pump. In Methanosarcina acetivorans (strain ATCC 35395 / DSM 2834 / JCM 12185 / C2A), this protein is Putative manganese efflux pump MntP.